A 785-amino-acid chain; its full sequence is MDGEEHQIDGDEVNNHENKLNEKKKSWGKLYRPDSFIIEAGQTPTNTGRRSLMSWRTTMSLAFQSLGVVYGDIGTSPLYVYASTFTDGINDKDDVVGVLSLIIYTITLVALLKYVFIVLQANDNGEGGTFALYSLICRYAKMGLIPNQEPEDVELSNYTLELPTTQLRRAHMIKEKLENSKFAKIILFLVTIMGTSMVIGDGILTPSISVLSAVSGIKSLGQNTVVGVSVAILIVLFAFQRFGTDKVGFSFAPIILVWFTFLIGIGLFNLFKHDITVLKALNPLYIIYYFRRTGRQGWISLGGVFLCITGTEAMFADLGHFSVRAVQISFSCVAYPALVTIYCGQAAYLTKHTYNVSNTFYDSIPDPLYWPTFVVAVAASIIASQAMISGAFSVISQSLRMGCFPRVKVVHTSAKYEGQVYIPEINYLLMLACIAVTLAFRTTEKIGHAYGIAVVTVMVITTLMVTLIMLVIWKTNIVWIAIFLVVFGSIEMLYLSSVMYKFTSGGYLPLTITVVLMAMMAIWQYVHVLKYRYELREKISRENAIQMATSPDVNRVPGIGLFYTELVNGITPLFSHYISNLSSVHSVFVLISIKTLPVNRVTSSERFFFRYVGPKDSGMFRCVVRYGYKEDIEEPDEFERHFVYYLKEFIHHEHFMSGGGGEVDETDKEEEPNAETTVVPSSNYVPSSGRIGSAHSSSSDKIRSGRVVQVQSVEDQTELVEKAREKGMVYLMGETEITAEKESSLFKKFIVNHAYNFLKKNCREGDKALAIPRSKLLKVGMTYEL.

Residues 1–60 (MDGEEHQIDGDEVNNHENKLNEKKKSWGKLYRPDSFIIEAGQTPTNTGRRSLMSWRTTMS) lie on the Cytoplasmic side of the membrane. The residue at position 35 (S35) is a Phosphoserine. A helical transmembrane segment spans residues 61–81 (LAFQSLGVVYGDIGTSPLYVY). Residues 82–97 (ASTFTDGINDKDDVVG) lie on the Extracellular side of the membrane. Residues 98-118 (VLSLIIYTITLVALLKYVFIV) traverse the membrane as a helical segment. Over 119 to 184 (LQANDNGEGG…EKLENSKFAK (66 aa)) the chain is Cytoplasmic. A helical membrane pass occupies residues 185–205 (IILFLVTIMGTSMVIGDGILT). Residues 206-218 (PSISVLSAVSGIK) are Extracellular-facing. A helical transmembrane segment spans residues 219–239 (SLGQNTVVGVSVAILIVLFAF). At 240–247 (QRFGTDKV) the chain is on the cytoplasmic side. The chain crosses the membrane as a helical span at residues 248-268 (GFSFAPIILVWFTFLIGIGLF). Residues 269 to 297 (NLFKHDITVLKALNPLYIIYYFRRTGRQG) lie on the Extracellular side of the membrane. A helical membrane pass occupies residues 298–318 (WISLGGVFLCITGTEAMFADL). Over 319 to 327 (GHFSVRAVQ) the chain is Cytoplasmic. A helical membrane pass occupies residues 328–348 (ISFSCVAYPALVTIYCGQAAY). At 349–367 (LTKHTYNVSNTFYDSIPDP) the chain is on the extracellular side. Residue N355 is glycosylated (N-linked (GlcNAc...) asparagine). The chain crosses the membrane as a helical span at residues 368-388 (LYWPTFVVAVAASIIASQAMI). The Cytoplasmic segment spans residues 389–419 (SGAFSVISQSLRMGCFPRVKVVHTSAKYEGQ). Residues 420–440 (VYIPEINYLLMLACIAVTLAF) traverse the membrane as a helical segment. The Extracellular segment spans residues 441-451 (RTTEKIGHAYG). The helical transmembrane segment at 452–472 (IAVVTVMVITTLMVTLIMLVI) threads the bilayer. Residues 473 to 476 (WKTN) lie on the Cytoplasmic side of the membrane. Residues 477–497 (IVWIAIFLVVFGSIEMLYLSS) form a helical membrane-spanning segment. Residues 498-501 (VMYK) lie on the Extracellular side of the membrane. A helical transmembrane segment spans residues 502–522 (FTSGGYLPLTITVVLMAMMAI). Topologically, residues 523–785 (WQYVHVLKYR…LLKVGMTYEL (263 aa)) are cytoplasmic. Residues 660–699 (GGEVDETDKEEEPNAETTVVPSSNYVPSSGRIGSAHSSSS) form a disordered region. Acidic residues predominate over residues 662–673 (EVDETDKEEEPN). The span at 674–686 (AETTVVPSSNYVP) shows a compositional bias: polar residues. The span at 687 to 697 (SSGRIGSAHSS) shows a compositional bias: low complexity.

It belongs to the HAK/KUP transporter (TC 2.A.72.3) family. Interacts with ILK1. Post-translationally, phosphorylated at the N-terminus (amino acids 1-95) by CIPK23. As to expression, predominantly expressed in the roots.

Its subcellular location is the cell membrane. Functionally, high-affinity potassium transporter. Can also transport rubidium and cesium. Is essential with AKT1 for high-affinity potassium uptake in roots during seedling establishment and postgermination growth under low potassium conditions. Mediates potassium uptake by plant roots in response to low potassium conditions, by a calcium-, CBL-, and CIPK-dependent pathway. Positively regulated by the calcium sensors calcineurin B-like genes CBL1, CBL8, CBL9 and CBL10, and by phosphorylation by CIPK23. The sequence is that of Potassium transporter 5 (POT5) from Arabidopsis thaliana (Mouse-ear cress).